Here is a 506-residue protein sequence, read N- to C-terminus: Thyroid hormone receptor alpha (506 aa).

The tract at residues 1 to 32 is disordered; it reads MEQKPSKVECGSDPEENSARSPDGKRKRKNGQ. Positions 1-52 are modulating; sequence MEQKPSKVECGSDPEENSARSPDGKRKRKNGQCSLKTSMSGYIPSYLDKDEQ. Zn(2+) contacts are provided by C53, C56, C70, C73, C91, C97, C107, and C110. 2 consecutive NR C4-type zinc fingers follow at residues 53 to 73 and 91 to 115; these read CVVC…CEGC and CKYD…FKKC. Positions 53–127 form a DNA-binding region, nuclear receptor; sequence CVVCGDKATG…VGMAMDLVLD (75 aa). The NR LBD domain occupies 163–407; that stretch reads EEWDLIHVAT…EGQQLLGMHV (245 aa). 3,3',5-triiodo-L-thyronine-binding residues include R228 and S277. Residues 460–506 are disordered; the sequence is GEDDSSEAGSLTSSDEDPEVCEDAAQATQPLPEAPPRADGEGGGGGS.

The protein belongs to the nuclear hormone receptor family. NR1 subfamily. Binds DNA as a dimer; homodimer and heterodimer with RXRB. Interacts with NCOA3 and NCOA6 coactivators, leading to a strong increase of transcription of target genes. Probably interacts with SFPQ. Interacts with C1D. Interacts with AKAP13. Interacts with TP53INP2. Interacts with PER2. Interacts with PER2. Isoform alpha-2 and isoform alpha-1 interact with TACC1, but the interaction with alpha-1 is weaker. The interaction with isoform alpha-1, but not alpha-2, is decreased in the presence of thyroid hormone T3.

Its subcellular location is the nucleus. It localises to the cytoplasm. In terms of biological role, nuclear hormone receptor that can act as a repressor or activator of transcription. High affinity receptor for thyroid hormones, including triiodothyronine and thyroxine. The sequence is that of Thyroid hormone receptor alpha (THRA) from Sus scrofa (Pig).